The following is a 129-amino-acid chain: Follitropin subunit beta (129 aa).

An N-terminal signal peptide occupies residues 1–18 (MKTVQFCFLFCCWKAICC). Disulfide bonds link C21-C69, C35-C84, C38-C122, C46-C100, C50-C102, and C105-C112. 2 N-linked (GlcNAc...) asparagine glycosylation sites follow: N25 and N42.

This sequence belongs to the glycoprotein hormones subunit beta family. Heterodimer. The active follitropin is a heterodimer composed of an alpha chain/CGA shared with other hormones and a unique beta chain/FSHB shown here.

The protein localises to the secreted. Together with the alpha chain CGA constitutes follitropin, the follicle-stimulating hormone, and provides its biological specificity to the hormone heterodimer. Binds FSHR, a G protein-coupled receptor, on target cells to activate downstream signaling pathways. Follitropin is involved in follicle development and spermatogenesis in reproductive organs. The protein is Follitropin subunit beta (FSHB) of Macaca fascicularis (Crab-eating macaque).